The chain runs to 416 residues: CinA-like protein (416 aa).

This sequence belongs to the CinA family.

The polypeptide is CinA-like protein (Trichormus variabilis (strain ATCC 29413 / PCC 7937) (Anabaena variabilis)).